The following is a 465-amino-acid chain: Methionine aminopeptidase 2-1 (465 aa).

Residues 1 to 100 form a disordered region; that stretch reads MGSKTAENES…QSSPPRIPLA (100 aa). The span at 31–40 shows a compositional bias: basic and acidic residues; sequence RGAHWSRDGD. Over residues 75–87 the composition is skewed to basic residues; the sequence is SKKRKKRPKKKTS. H216 is a binding site for substrate. A divalent metal cation is bound by residues D237, D248, and H317. Residue H325 coordinates substrate. Residues E350 and E446 each contribute to the a divalent metal cation site.

This sequence belongs to the peptidase M24A family. Methionine aminopeptidase eukaryotic type 2 subfamily. Requires Co(2+) as cofactor. Zn(2+) serves as cofactor. It depends on Mn(2+) as a cofactor. Fe(2+) is required as a cofactor.

Its subcellular location is the cytoplasm. The enzyme catalyses Release of N-terminal amino acids, preferentially methionine, from peptides and arylamides.. Cotranslationally removes the N-terminal methionine from nascent proteins. The N-terminal methionine is often cleaved when the second residue in the primary sequence is small and uncharged (Met-Ala-, Cys, Gly, Pro, Ser, Thr, or Val). This Penicillium rubens (strain ATCC 28089 / DSM 1075 / NRRL 1951 / Wisconsin 54-1255) (Penicillium chrysogenum) protein is Methionine aminopeptidase 2-1.